Consider the following 682-residue polypeptide: PWWP domain-containing DNA repair factor 3A (682 aa).

At Ser-105 the chain carries Phosphoserine. Residues 121–145 (EKTDADVASQVSSAPSPSLLGEDGQ) are disordered. Residues 127-140 (VASQVSSAPSPSLL) show a composition bias toward low complexity. Residue Ser-168 is modified to Phosphoserine. Disordered stretches follow at residues 179-318 (GPKT…GAAP) and 334-369 (GAGD…EEEP). The segment covering 203-220 (HGQESTTKKRQRNLGEKP) has biased composition (basic and acidic residues). Ser-345 and Ser-346 each carry phosphoserine. The segment covering 346 to 357 (SEESTGFKSTHS) has biased composition (polar residues). The PWWP domain maps to 383–444 (VGMLVWLKYQ…KHFDCKEKHA (62 aa)).

It belongs to the PWWP3A family. As to quaternary structure, interacts with TP53BP1 (via BRCT domain); the interaction is not dependent on its phosphorylation status. Binds nucleosomes. Interacts with trimethylated 'Lys-36' of histone H3 (H3K36me3) (in vitro).

The protein localises to the nucleus. Involved in the DNA damage response pathway by contributing to the maintenance of chromatin architecture. Recruited to the vicinity of DNA breaks by TP53BP1 and plays an accessory role to facilitate damage-induced chromatin changes and promoting chromatin relaxation. Required for efficient DNA repair and cell survival following DNA damage. In Mus musculus (Mouse), this protein is PWWP domain-containing DNA repair factor 3A (Pwwp3a).